A 128-amino-acid polypeptide reads, in one-letter code: Ribonuclease P protein component (128 aa).

The protein belongs to the RnpA family. In terms of assembly, consists of a catalytic RNA component (M1 or rnpB) and a protein subunit.

It carries out the reaction Endonucleolytic cleavage of RNA, removing 5'-extranucleotides from tRNA precursor.. RNaseP catalyzes the removal of the 5'-leader sequence from pre-tRNA to produce the mature 5'-terminus. It can also cleave other RNA substrates such as 4.5S RNA. The protein component plays an auxiliary but essential role in vivo by binding to the 5'-leader sequence and broadening the substrate specificity of the ribozyme. This chain is Ribonuclease P protein component, found in Rhizobium meliloti (strain 1021) (Ensifer meliloti).